Reading from the N-terminus, the 88-residue chain is LYR motif-containing protein 2 (88 aa).

The N-terminal 19 residues, 1 to 19, are a transit peptide targeting the mitochondrion; that stretch reads MAASRLPPAALTLKQFMRR.

This sequence belongs to the complex I LYR family.

Its subcellular location is the mitochondrion. Its function is as follows. Involved in efficient integration of the N-module into mitochondrial respiratory chain complex I. The polypeptide is LYR motif-containing protein 2 (Lyrm2) (Mus musculus (Mouse)).